Here is a 601-residue protein sequence, read N- to C-terminus: Polypeptide N-acetylgalactosaminyltransferase 11 (601 aa).

Residues 1–7 (MGSAALR) are Cytoplasmic-facing. A helical; Signal-anchor for type II membrane protein transmembrane segment spans residues 8–28 (CFCYGCLFTSVTWTLLLFIYF). 2 N-linked (GlcNAc...) asparagine glycosylation sites follow: Asn29 and Asn202. Over 29 to 601 (NFSEESQGFR…SPSQQWHLEN (573 aa)) the chain is Lumenal. The interval 143–254 (LPMASIVICF…EMWLQPLLAP (112 aa)) is catalytic subdomain A. Residues 312–374 (PFRSPTMAGG…PCSRVGHIFR (63 aa)) form a catalytic subdomain B region. The Ricin B-type lectin domain occupies 469–600 (RPKILQRGRL…GSPSQQWHLE (132 aa)). An intrachain disulfide couples Cys486 to Cys505. Residue Asn508 is glycosylated (N-linked (GlcNAc...) asparagine). Cystine bridges form between Cys529–Cys546 and Cys571–Cys589.

It belongs to the glycosyltransferase 2 family. GalNAc-T subfamily. Interacts with notch1. Requires Mn(2+) as cofactor. It depends on Ca(2+) as a cofactor.

It is found in the golgi apparatus membrane. It carries out the reaction L-seryl-[protein] + UDP-N-acetyl-alpha-D-galactosamine = a 3-O-[N-acetyl-alpha-D-galactosaminyl]-L-seryl-[protein] + UDP + H(+). It catalyses the reaction L-threonyl-[protein] + UDP-N-acetyl-alpha-D-galactosamine = a 3-O-[N-acetyl-alpha-D-galactosaminyl]-L-threonyl-[protein] + UDP + H(+). Its pathway is protein modification; protein glycosylation. Functionally, polypeptide N-acetylgalactosaminyltransferase that catalyzes the initiation of protein O-linked glycosylation and is involved in left/right asymmetry by mediating O-glycosylation of NOTCH1. O-glycosylation of NOTCH1 promotes activation of NOTCH1, modulating the balance between motile and immotile (sensory) cilia at the left-right organiser (LRO). Polypeptide N-acetylgalactosaminyltransferases catalyze the transfer of an N-acetyl-D-galactosamine residue to a serine or threonine residue on the protein receptor. The chain is Polypeptide N-acetylgalactosaminyltransferase 11 (galnt11) from Xenopus tropicalis (Western clawed frog).